A 354-amino-acid polypeptide reads, in one-letter code: Guanine nucleotide-binding protein G(i) subunit alpha-1 (354 aa).

A lipid anchor (N-myristoyl glycine) is attached at Gly2. Residue Cys3 is the site of S-palmitoyl cysteine attachment. The G-alpha domain maps to 32–354; the sequence is REVKLLLLGA…KNNLKDCGLF (323 aa). Residues 35 to 48 form a G1 motif region; the sequence is KLLLLGAGESGKST. GTP-binding positions include 43–48, 150–151, and 175–178; these read ESGKST, DS, and LRTR. Ser47 provides a ligand contact to Mg(2+). Positions 173–181 are G2 motif; it reads DVLRTRVKT. Thr181 is a Mg(2+) binding site. Positions 196–205 are G3 motif; it reads FKMFDVGGQR. Residues 200–204, 269–272, and Ala326 each bind GTP; these read DVGGQ and NKKD. The segment at 265–272 is G4 motif; the sequence is ILFLNKKD. The G5 motif stretch occupies residues 324-329; that stretch reads TCATDT.

Belongs to the G-alpha family. G(i/o/t/z) subfamily. Heterotrimeric G proteins are composed of 3 units; alpha, beta and gamma. The alpha chain contains the guanine nucleotide binding site. Part of a spindle orientation complex at least composed of GNAI1, GPSM2 and NUMA1. Identified in complex with the beta subunit GNB1 and the gamma subunit GNG1. Identified in complex with the beta subunit GNB1 and the gamma subunit GNG2. Component of the TAS2R14-GNAI1 complex, consisting of TAS2R14, GNAI1, GNB1 and GNG2; within the complex interacts with TAS2R14; this complex plays a role in the perception of bitterness. GTP binding causes dissociation of the heterotrimer, liberating the individual subunits so that they can interact with downstream effector proteins. Interacts (GDP-bound form) with GPSM1; this inhibits guanine nucleotide exchange and GTP binding. Interacts (GDP-bound form) with GPSM2 (via GoLoco domains); this inhibits guanine nucleotide exchange. Interacts with RGS10; this strongly enhances GTP hydrolysis. Interacts with RGS1 and RGS16; this strongly enhances GTPase activity. Interacts with RGS4. Interacts with RGS12. Interacts (via active GTP- or inactive GDP-bound forms) with RGS14 (via RGS and GoLoco domains). Interacts with RGS3, RGS6, RGS7, RGS8, RGS17, RGS18 and RGS20 (in vitro). Interacts (GDP-bound form) with RIC8A (via C-terminus); promoting GNAI1 folding and association with the plasma membrane. Interacts (inactive GDP-bound form) with NUCB1 (via GBA motif); the interaction leads to activation of GNAI1. Interacts (inactive GDP-bound form) with CCDC88C/DAPLE (via GBA motif); the interaction leads to activation of GNAI1. Interacts (inactive GDP-bound form) with CCDC8A/GIV (via GBA motif). Interacts with GPR15. Myristoylation at Gly-2 is required for membrane anchoring before palmitoylation. In terms of processing, palmitoylation at Cys-3 varies with membrane lipid composition.

It is found in the nucleus. The protein resides in the cytoplasm. It localises to the cell membrane. The protein localises to the cytoskeleton. Its subcellular location is the microtubule organizing center. It is found in the centrosome. The protein resides in the cell cortex. It localises to the membrane. In terms of biological role, guanine nucleotide-binding proteins (G proteins) function as transducers downstream of G protein-coupled receptors (GPCRs) in numerous signaling cascades. The alpha chain contains the guanine nucleotide binding site and alternates between an active, GTP-bound state and an inactive, GDP-bound state. Signaling by an activated GPCR promotes GDP release and GTP binding. The alpha subunit has a low GTPase activity that converts bound GTP to GDP, thereby terminating the signal. Both GDP release and GTP hydrolysis are modulated by numerous regulatory proteins. Signaling is mediated via effector proteins, such as adenylate cyclase. Inhibits adenylate cyclase activity of ADCY1, ADCY5 and ADCY6, leading to decreased intracellular cAMP levels. The inactive GDP-bound form prevents the association of RGS14 with centrosomes and is required for the translocation of RGS14 from the cytoplasm to the plasma membrane. Required for normal cytokinesis during mitosis. Required for cortical dynein-dynactin complex recruitment during metaphase. The polypeptide is Guanine nucleotide-binding protein G(i) subunit alpha-1 (GNAI1) (Pongo abelii (Sumatran orangutan)).